A 397-amino-acid polypeptide reads, in one-letter code: Carbamoyl phosphate synthase small chain (397 aa).

Residues 1–204 are CPSase; the sequence is MSPLLPSFPF…PAYRTLDTSK (204 aa). The L-glutamine site is built by S53, G256, and G258. The Glutamine amidotransferase type-1 domain occupies 208 to 395; the sequence is KVVAYDFGVK…MELMNAAKKE (188 aa). C284 serves as the catalytic Nucleophile. Positions 285, 288, 326, 328, and 329 each coordinate L-glutamine. Residues H368 and E370 contribute to the active site.

This sequence belongs to the CarA family. In terms of assembly, composed of two chains; the small (or glutamine) chain promotes the hydrolysis of glutamine to ammonia, which is used by the large (or ammonia) chain to synthesize carbamoyl phosphate. Tetramer of heterodimers (alpha,beta)4.

The catalysed reaction is hydrogencarbonate + L-glutamine + 2 ATP + H2O = carbamoyl phosphate + L-glutamate + 2 ADP + phosphate + 2 H(+). The enzyme catalyses L-glutamine + H2O = L-glutamate + NH4(+). It functions in the pathway amino-acid biosynthesis; L-arginine biosynthesis; carbamoyl phosphate from bicarbonate: step 1/1. Its pathway is pyrimidine metabolism; UMP biosynthesis via de novo pathway; (S)-dihydroorotate from bicarbonate: step 1/3. Its function is as follows. Small subunit of the glutamine-dependent carbamoyl phosphate synthetase (CPSase). CPSase catalyzes the formation of carbamoyl phosphate from the ammonia moiety of glutamine, carbonate, and phosphate donated by ATP, constituting the first step of 2 biosynthetic pathways, one leading to arginine and/or urea and the other to pyrimidine nucleotides. The small subunit (glutamine amidotransferase) binds and cleaves glutamine to supply the large subunit with the substrate ammonia. The sequence is that of Carbamoyl phosphate synthase small chain from Polynucleobacter asymbioticus (strain DSM 18221 / CIP 109841 / QLW-P1DMWA-1) (Polynucleobacter necessarius subsp. asymbioticus).